Consider the following 447-residue polypeptide: Tubulin beta chain (447 aa).

Residues glutamine 11, glutamate 69, serine 138, glycine 142, threonine 143, glycine 144, asparagine 204, and asparagine 226 each coordinate GTP. Glutamate 69 provides a ligand contact to Mg(2+). The tract at residues 421–447 (EYQQYQDASISEGEEEYEEEAPMEPEE) is disordered. A compositionally biased stretch (acidic residues) spans 432-447 (EGEEEYEEEAPMEPEE).

It belongs to the tubulin family. Dimer of alpha and beta chains. A typical microtubule is a hollow water-filled tube with an outer diameter of 25 nm and an inner diameter of 15 nM. Alpha-beta heterodimers associate head-to-tail to form protofilaments running lengthwise along the microtubule wall with the beta-tubulin subunit facing the microtubule plus end conferring a structural polarity. Microtubules usually have 13 protofilaments but different protofilament numbers can be found in some organisms and specialized cells. Mg(2+) serves as cofactor.

The protein resides in the cytoplasm. It localises to the cytoskeleton. Tubulin is the major constituent of microtubules, a cylinder consisting of laterally associated linear protofilaments composed of alpha- and beta-tubulin heterodimers. Microtubules grow by the addition of GTP-tubulin dimers to the microtubule end, where a stabilizing cap forms. Below the cap, tubulin dimers are in GDP-bound state, owing to GTPase activity of alpha-tubulin. The sequence is that of Tubulin beta chain from Rhynchosporium secalis (Barley scald fungus).